Here is a 306-residue protein sequence, read N- to C-terminus: Beta-lactamase 1 (306 aa).

The first 43 residues, 1-43, serve as a signal peptide directing secretion; the sequence is MKNKRMLKIGMCVGILGLSVTSLEAFTGGALQVEAKEKTGQVK. Ser89 serves as the catalytic Acyl-ester intermediate. Glu185 serves as the catalytic Proton acceptor. Residue 251–253 participates in substrate binding; the sequence is KSG.

Belongs to the class-A beta-lactamase family.

The enzyme catalyses a beta-lactam + H2O = a substituted beta-amino acid. Functionally, this protein is a beta-lactamase with a substrate specificity for penicillins. The chain is Beta-lactamase 1 (blaCI) from Bacillus mycoides.